We begin with the raw amino-acid sequence, 181 residues long: ATP-dependent protease subunit HslV (181 aa).

Residue threonine 7 is part of the active site. 3 residues coordinate Na(+): alanine 162, cysteine 165, and threonine 168.

Belongs to the peptidase T1B family. HslV subfamily. In terms of assembly, a double ring-shaped homohexamer of HslV is capped on each side by a ring-shaped HslU homohexamer. The assembly of the HslU/HslV complex is dependent on binding of ATP.

Its subcellular location is the cytoplasm. The catalysed reaction is ATP-dependent cleavage of peptide bonds with broad specificity.. With respect to regulation, allosterically activated by HslU binding. In terms of biological role, protease subunit of a proteasome-like degradation complex believed to be a general protein degrading machinery. In Coxiella burnetii (strain RSA 493 / Nine Mile phase I), this protein is ATP-dependent protease subunit HslV.